The sequence spans 100 residues: Integration host factor subunit alpha (100 aa).

Residues 54–73 (DLRDKRQRPGRNPKTGEEIP) are disordered.

It belongs to the bacterial histone-like protein family. Heterodimer of an alpha and a beta chain.

Functionally, this protein is one of the two subunits of integration host factor, a specific DNA-binding protein that functions in genetic recombination as well as in transcriptional and translational control. This Pseudomonas savastanoi pv. phaseolicola (strain 1448A / Race 6) (Pseudomonas syringae pv. phaseolicola (strain 1448A / Race 6)) protein is Integration host factor subunit alpha.